A 271-amino-acid polypeptide reads, in one-letter code: MRNKLQQAKRIVIKVGTSSLIYPNGNINLKAIDQLAFTLSDLSNQGKEIILVSSGAIGVGLNKLNLSVRPTTIPEQQAVAAVGQAELMNIYNQRFSTYSQQMAQVLLTRDVIEYPESRNNVTNTFEQLLKMNIIPIVNENDTVAIEELDHLTKFGDNDQLSAIVCQIVQADLLVMLSDIDGFFSDNPTVNKEATLFSEINEINEDLFQLAGGKGSRFGTGGMSSKLKAAERVLANQQAMILANGKQPKIIFEILEGKDIGTLFIKGGHESD.

Lys-14 provides a ligand contact to ATP. Residues Ser-54, Asp-141, and Asn-157 each contribute to the substrate site. Residues 177–178 (SD) and 219–225 (TGGMSSK) each bind ATP.

It belongs to the glutamate 5-kinase family.

It is found in the cytoplasm. The enzyme catalyses L-glutamate + ATP = L-glutamyl 5-phosphate + ADP. Its pathway is amino-acid biosynthesis; L-proline biosynthesis; L-glutamate 5-semialdehyde from L-glutamate: step 1/2. Catalyzes the transfer of a phosphate group to glutamate to form L-glutamate 5-phosphate. This is Glutamate 5-kinase from Enterococcus faecalis (strain ATCC 700802 / V583).